The sequence spans 337 residues: Phosphate acyltransferase (337 aa).

This sequence belongs to the PlsX family. In terms of assembly, homodimer. Probably interacts with PlsY.

The protein resides in the cytoplasm. It carries out the reaction a fatty acyl-[ACP] + phosphate = an acyl phosphate + holo-[ACP]. Its pathway is lipid metabolism; phospholipid metabolism. Functionally, catalyzes the reversible formation of acyl-phosphate (acyl-PO(4)) from acyl-[acyl-carrier-protein] (acyl-ACP). This enzyme utilizes acyl-ACP as fatty acyl donor, but not acyl-CoA. This is Phosphate acyltransferase from Ehrlichia chaffeensis (strain ATCC CRL-10679 / Arkansas).